A 248-amino-acid polypeptide reads, in one-letter code: Probable septum site-determining protein MinC (248 aa).

Positions 115–144 are disordered; sequence PTAVSPPPPPPPPARAEPAPPAARPAPGRM. Over residues 118–138 the composition is skewed to pro residues; that stretch reads VSPPPPPPPPARAEPAPPAAR.

This sequence belongs to the MinC family. As to quaternary structure, interacts with MinD and FtsZ.

Functionally, cell division inhibitor that blocks the formation of polar Z ring septums. Rapidly oscillates between the poles of the cell to destabilize FtsZ filaments that have formed before they mature into polar Z rings. Prevents FtsZ polymerization. The sequence is that of Probable septum site-determining protein MinC from Xanthomonas euvesicatoria pv. vesicatoria (strain 85-10) (Xanthomonas campestris pv. vesicatoria).